The sequence spans 255 residues: tRNA pseudouridine synthase A (255 aa).

The Nucleophile role is filled by D52. Y111 is a binding site for substrate.

Belongs to the tRNA pseudouridine synthase TruA family. As to quaternary structure, homodimer.

The catalysed reaction is uridine(38/39/40) in tRNA = pseudouridine(38/39/40) in tRNA. Formation of pseudouridine at positions 38, 39 and 40 in the anticodon stem and loop of transfer RNAs. The polypeptide is tRNA pseudouridine synthase A (Nitrobacter winogradskyi (strain ATCC 25391 / DSM 10237 / CIP 104748 / NCIMB 11846 / Nb-255)).